Consider the following 276-residue polypeptide: Diaminopimelate epimerase (276 aa).

Asn-13, Gln-46, and Asn-66 together coordinate substrate. Cys-75 serves as the catalytic Proton donor. Substrate contacts are provided by residues Gly-76–Asn-77, Asn-159, Asn-192, and Glu-210–Arg-211. Cys-219 functions as the Proton acceptor in the catalytic mechanism. Gly-220–Thr-221 lines the substrate pocket.

This sequence belongs to the diaminopimelate epimerase family. In terms of assembly, homodimer.

The protein resides in the cytoplasm. It carries out the reaction (2S,6S)-2,6-diaminopimelate = meso-2,6-diaminopimelate. The protein operates within amino-acid biosynthesis; L-lysine biosynthesis via DAP pathway; DL-2,6-diaminopimelate from LL-2,6-diaminopimelate: step 1/1. In terms of biological role, catalyzes the stereoinversion of LL-2,6-diaminopimelate (L,L-DAP) to meso-diaminopimelate (meso-DAP), a precursor of L-lysine and an essential component of the bacterial peptidoglycan. This Tolumonas auensis (strain DSM 9187 / NBRC 110442 / TA 4) protein is Diaminopimelate epimerase.